A 267-amino-acid polypeptide reads, in one-letter code: L-aspartate dehydrogenase (267 aa).

2 residues coordinate NAD(+): Ala-124 and Asn-190. Residue His-218 is part of the active site.

It belongs to the L-aspartate dehydrogenase family.

It carries out the reaction L-aspartate + NADP(+) + H2O = oxaloacetate + NH4(+) + NADPH + H(+). The catalysed reaction is L-aspartate + NAD(+) + H2O = oxaloacetate + NH4(+) + NADH + H(+). It participates in cofactor biosynthesis; NAD(+) biosynthesis; iminoaspartate from L-aspartate (dehydrogenase route): step 1/1. Specifically catalyzes the NAD or NADP-dependent dehydrogenation of L-aspartate to iminoaspartate. The polypeptide is L-aspartate dehydrogenase (Methanococcus maripaludis (strain C7 / ATCC BAA-1331)).